The primary structure comprises 484 residues: Regulator of G-protein signaling 9 (484 aa).

The DEP domain occupies 30-105 (PDTGVKTQSQ…PDSSLYRFQT (76 aa)). Positions 219–280 (ITAVKKEIMY…ITDDTQFWDL (62 aa)) constitute a G protein gamma domain. One can recognise an RGS domain in the interval 299 to 414 (NFSELIRDPK…LKSPIYKEML (116 aa)).

Heterodimer with Gbeta5. Interacts with RGS7BP, leading to regulate the subcellular location of the heterodimer formed with Gbeta5. Component of the RGS9-1-Gbeta5 complex composed of RGS9 (RGS9-1), Gbeta5 (GNB5) and RGS9BP. Post-translationally, phosphorylation is decreased by light exposition.

Its subcellular location is the membrane. In terms of biological role, inhibits signal transduction by increasing the GTPase activity of G protein alpha subunits thereby driving them into their inactive GDP-bound form. Binds to G(t)-alpha. Involved in phototransduction; key element in the recovery phase of visual transduction. This Tamias striatus (Eastern chipmunk) protein is Regulator of G-protein signaling 9.